We begin with the raw amino-acid sequence, 246 residues long: uncharacterized protein (246 aa).

A run of 6 helical transmembrane segments spans residues 7 to 27, 50 to 70, 99 to 119, 135 to 155, 163 to 183, and 219 to 239; these read KVTLVSLILMAVFQFFMALII, LNILLQALTIVIAATIVSMEF, VSFYLYLAYYILALLFGLLFF, LALIGSNWLEAVMMGLFGLLC, AVAVVVSFVVLYGASTLVQLM, and FSIGILIIHAIFFIVVGWWCF.

The protein localises to the cell membrane. This is an uncharacterized protein from Bacillus subtilis (strain 168).